The following is a 417-amino-acid chain: Serine hydroxymethyltransferase (417 aa).

Residues Leu116 and 120 to 122 contribute to the (6S)-5,6,7,8-tetrahydrofolate site; that span reads GHL. Residue Lys225 is modified to N6-(pyridoxal phosphate)lysine. Residue 350-352 coordinates (6S)-5,6,7,8-tetrahydrofolate; that stretch reads SPF.

This sequence belongs to the SHMT family. As to quaternary structure, homodimer. The cofactor is pyridoxal 5'-phosphate.

It is found in the cytoplasm. The catalysed reaction is (6R)-5,10-methylene-5,6,7,8-tetrahydrofolate + glycine + H2O = (6S)-5,6,7,8-tetrahydrofolate + L-serine. It participates in one-carbon metabolism; tetrahydrofolate interconversion. The protein operates within amino-acid biosynthesis; glycine biosynthesis; glycine from L-serine: step 1/1. Functionally, catalyzes the reversible interconversion of serine and glycine with tetrahydrofolate (THF) serving as the one-carbon carrier. This reaction serves as the major source of one-carbon groups required for the biosynthesis of purines, thymidylate, methionine, and other important biomolecules. Also exhibits THF-independent aldolase activity toward beta-hydroxyamino acids, producing glycine and aldehydes, via a retro-aldol mechanism. This chain is Serine hydroxymethyltransferase, found in Ligilactobacillus salivarius (strain UCC118) (Lactobacillus salivarius).